The primary structure comprises 113 residues: U11-theraphotoxin-Hhn1a (113 aa).

Residues 1–21 form the signal peptide; sequence MNTVRVTFLLVFVLAVSLGQA. Positions 22–74 are excised as a propeptide; sequence DKDENRMEMQEKTEQGKSYLDFAENLLLQKLEELEAKLLEEDSEESRNSRQRR. The interval 61–83 is disordered; that stretch reads EEDSEESRNSRQRRCIGEGVPCD. 3 disulfides stabilise this stretch: Cys-75–Cys-90, Cys-82–Cys-95, and Cys-89–Cys-110.

The protein belongs to the neurotoxin 14 (magi-1) family. 01 (HNTX-16) subfamily. In terms of tissue distribution, expressed by the venom gland.

The protein localises to the secreted. Its function is as follows. Probable ion channel inhibitor. This Cyriopagopus hainanus (Chinese bird spider) protein is U11-theraphotoxin-Hhn1a.